The following is a 290-amino-acid chain: Elongation factor Ts (290 aa).

The segment at 79 to 82 is involved in Mg(2+) ion dislocation from EF-Tu; that stretch reads TDFV.

Belongs to the EF-Ts family.

Its subcellular location is the cytoplasm. Its function is as follows. Associates with the EF-Tu.GDP complex and induces the exchange of GDP to GTP. It remains bound to the aminoacyl-tRNA.EF-Tu.GTP complex up to the GTP hydrolysis stage on the ribosome. This chain is Elongation factor Ts, found in Pseudoalteromonas atlantica (strain T6c / ATCC BAA-1087).